Here is a 539-residue protein sequence, read N- to C-terminus: Beta-agarase A (539 aa).

The signal sequence occupies residues 1 to 19 (MKKNYLLLYFIFLLCGSIA). Residues 21–289 (QDWNGIPVPA…WIRVYKPVAV (269 aa)) enclose the GH16 domain. Substrate contacts are provided by residues tryptophan 73, 82 to 92 (NAPQAWTNGSQ), 96 to 98 (QAQ), and glutamate 144. Catalysis depends on glutamate 147, which acts as the Nucleophile. The active-site Proton donor is the glutamate 152. The substrate site is built by arginine 176 and aspartate 271. The tract at residues 332-353 (WANTNDIGSRDRGASNGRNNIN) is disordered.

This sequence belongs to the glycosyl hydrolase 16 family. Monomer. In terms of processing, proteolytically cleaved into mature beta-agarase A catalytic chain (AgaAc).

The protein resides in the secreted. It catalyses the reaction Hydrolysis of (1-&gt;4)-beta-D-galactosidic linkages in agarose, giving the tetramer as the predominant product.. Functionally, cleaves the beta-1,4-linkages between beta-D-galactose and alpha-L-3,6-anhydro-galactose residues in agarose. Cleaves agarose in a random manner with retention of the anomeric-bond configuration, producing beta-anomers that give rise progressively to alpha-anomers when mutarotation takes place. The protein is Beta-agarase A (agaA) of Zobellia galactanivorans (strain DSM 12802 / CCUG 47099 / CIP 106680 / NCIMB 13871 / Dsij).